Reading from the N-terminus, the 72-residue chain is Translation initiation factor IF-1 (72 aa).

One can recognise an S1-like domain in the interval 1-72 (MAKDDVIQMQ…SRARIVFRAK (72 aa)).

The protein belongs to the IF-1 family. In terms of assembly, component of the 30S ribosomal translation pre-initiation complex which assembles on the 30S ribosome in the order IF-2 and IF-3, IF-1 and N-formylmethionyl-tRNA(fMet); mRNA recruitment can occur at any time during PIC assembly.

The protein localises to the cytoplasm. Functionally, one of the essential components for the initiation of protein synthesis. Stabilizes the binding of IF-2 and IF-3 on the 30S subunit to which N-formylmethionyl-tRNA(fMet) subsequently binds. Helps modulate mRNA selection, yielding the 30S pre-initiation complex (PIC). Upon addition of the 50S ribosomal subunit IF-1, IF-2 and IF-3 are released leaving the mature 70S translation initiation complex. The chain is Translation initiation factor IF-1 from Burkholderia thailandensis (strain ATCC 700388 / DSM 13276 / CCUG 48851 / CIP 106301 / E264).